The following is a 523-amino-acid chain: Cyclin-dependent kinase 17 (523 aa).

Serine 9 bears the Phosphoserine mark. The interval threonine 30–histidine 55 is disordered. 3 positions are modified to phosphoserine: serine 80, serine 92, and serine 105. The interval methionine 103–proline 123 is disordered. Residues aspartate 110–proline 123 are compositionally biased toward polar residues. Phosphoserine is present on residues serine 137, serine 146, serine 165, and serine 180. Residues tyrosine 192–phenylalanine 473 form the Protein kinase domain. Residues leucine 198–valine 206 and lysine 221 contribute to the ATP site. The Proton acceptor role is filled by aspartate 313. The tract at residues proline 501–phenylalanine 523 is disordered. Positions glycine 514–phenylalanine 523 are enriched in basic residues.

It belongs to the protein kinase superfamily. CMGC Ser/Thr protein kinase family. CDC2/CDKX subfamily. In terms of assembly, found in a complex containing CABLES1, CDK16 and TDRD7. Interacts with TDRD7.

The enzyme catalyses L-seryl-[protein] + ATP = O-phospho-L-seryl-[protein] + ADP + H(+). It catalyses the reaction L-threonyl-[protein] + ATP = O-phospho-L-threonyl-[protein] + ADP + H(+). Its function is as follows. May play a role in terminally differentiated neurons. Has a Ser/Thr-phosphorylating activity for histone H1. In Mus musculus (Mouse), this protein is Cyclin-dependent kinase 17 (Cdk17).